Consider the following 402-residue polypeptide: Phosphopentomutase (402 aa).

Residues D10, D301, H306, D342, H343, and H354 each contribute to the Mn(2+) site.

This sequence belongs to the phosphopentomutase family. Mn(2+) serves as cofactor.

Its subcellular location is the cytoplasm. It carries out the reaction 2-deoxy-alpha-D-ribose 1-phosphate = 2-deoxy-D-ribose 5-phosphate. The catalysed reaction is alpha-D-ribose 1-phosphate = D-ribose 5-phosphate. Its pathway is carbohydrate degradation; 2-deoxy-D-ribose 1-phosphate degradation; D-glyceraldehyde 3-phosphate and acetaldehyde from 2-deoxy-alpha-D-ribose 1-phosphate: step 1/2. Functionally, isomerase that catalyzes the conversion of deoxy-ribose 1-phosphate (dRib-1-P) and ribose 1-phosphate (Rib-1-P) to deoxy-ribose 5-phosphate (dRib-5-P) and ribose 5-phosphate (Rib-5-P), respectively. The protein is Phosphopentomutase of Aeromonas salmonicida (strain A449).